A 295-amino-acid polypeptide reads, in one-letter code: Mediator of RNA polymerase II transcription subunit 6 (295 aa).

The segment at 211–243 (TATAATNGNNAGGGSNKSSVRPTGGANMATVPS) is disordered. The residue at position 225 (Ser-225) is a Phosphoserine.

It belongs to the Mediator complex subunit 6 family. As to quaternary structure, component of the Mediator complex, which is composed of at least 21 subunits that form three structurally distinct submodules. The Mediator head module contains MED6, MED8, MED11, SRB4/MED17, SRB5/MED18, ROX3/MED19, SRB2/MED20 and SRB6/MED22, the middle module contains MED1, MED4, NUT1/MED5, MED7, CSE2/MED9, NUT2/MED10, SRB7/MED21 and SOH1/MED31, and the tail module contains MED2, PGD1/MED3, RGR1/MED14, GAL11/MED15 and SIN4/MED16. The head and the middle modules interact directly with RNA polymerase II, whereas the elongated tail module interacts with gene-specific regulatory proteins. MED6 interacts directly with SRB4/MED17 and SRB7/MED21.

The protein localises to the nucleus. Functionally, component of the Mediator complex, a coactivator involved in the regulated transcription of nearly all RNA polymerase II-dependent genes. Mediator functions as a bridge to convey information from gene-specific regulatory proteins to the basal RNA polymerase II transcription machinery. The Mediator complex, having a compact conformation in its free form, is recruited to promoters by direct interactions with regulatory proteins and serves for the assembly of a functional preinitiation complex with RNA polymerase II and the general transcription factors. The Mediator complex unfolds to an extended conformation and partially surrounds RNA polymerase II, specifically interacting with the unphosphorylated form of the C-terminal domain (CTD) of RNA polymerase II. The Mediator complex dissociates from the RNA polymerase II holoenzyme and stays at the promoter when transcriptional elongation begins. The polypeptide is Mediator of RNA polymerase II transcription subunit 6 (MED6) (Saccharomyces cerevisiae (strain ATCC 204508 / S288c) (Baker's yeast)).